The sequence spans 275 residues: NH(3)-dependent NAD(+) synthetase (275 aa).

Residue 46 to 53 participates in ATP binding; it reads GISGGQDS. Aspartate 52 contacts Mg(2+). Residue arginine 140 coordinates deamido-NAD(+). Residue threonine 160 participates in ATP binding. Glutamate 165 is a binding site for Mg(2+). Deamido-NAD(+) is bound by residues lysine 173 and aspartate 180. ATP-binding residues include lysine 189 and threonine 211. 260 to 261 contributes to the deamido-NAD(+) binding site; it reads HK.

This sequence belongs to the NAD synthetase family. As to quaternary structure, homodimer.

It catalyses the reaction deamido-NAD(+) + NH4(+) + ATP = AMP + diphosphate + NAD(+) + H(+). The protein operates within cofactor biosynthesis; NAD(+) biosynthesis; NAD(+) from deamido-NAD(+) (ammonia route): step 1/1. Functionally, catalyzes the ATP-dependent amidation of deamido-NAD to form NAD. Uses ammonia as a nitrogen source. The sequence is that of NH(3)-dependent NAD(+) synthetase from Escherichia coli O45:K1 (strain S88 / ExPEC).